A 700-amino-acid chain; its full sequence is E3 ubiquitin-protein ligase SspH1 (700 aa).

An interaction with target proteins region spans residues 1–395 (MFNIRNTQPS…HSGIRIHFDM (395 aa)). LRR repeat units follow at residues 217–238 (HITT…PEGL), 239–257 (RELE…SLPQ), 258–279 (GLQK…PPGL), 280–297 (GDLA…EMPP), 298–319 (ALRE…PSGL), 320–337 (QKLW…EMSP), 338–360 (GLQE…TGLS), and 361–381 (SAAR…QALR). The interval 396-403 (AGPSVPRE) is linker. Residues 404-700 (ARALHLAVAD…SYLTARWRLN (297 aa)) are E3 ubiquitin-protein ligase catalytic domain. The 295-residue stretch at 406–700 (ALHLAVADWL…SYLTARWRLN (295 aa)) folds into the NEL domain. Cys-492 serves as the catalytic Glycyl thioester intermediate.

This sequence belongs to the LRR-containing bacterial E3 ligase family. Interacts (via leucine-rich repeat region) with host PKN1 (via the second REM repeat). Post-translationally, ubiquitinated in the presence of host E1 ubiquitin-activating enzyme, E2 ubiquitin-conjugating enzyme and ubiquitin.

The protein localises to the secreted. The protein resides in the host cytoplasm. It localises to the host nucleus. The enzyme catalyses S-ubiquitinyl-[E2 ubiquitin-conjugating enzyme]-L-cysteine + [acceptor protein]-L-lysine = [E2 ubiquitin-conjugating enzyme]-L-cysteine + N(6)-ubiquitinyl-[acceptor protein]-L-lysine.. With respect to regulation, exists in an autoinhibited state in the absence of substrate protein, due to interactions of the leucine-rich repeat domain with the catalytic domain. Is activated upon binding to a substrate protein. Its function is as follows. Effector proteins function to alter host cell physiology and promote bacterial survival in host tissues. This protein is an E3 ubiquitin-protein ligase that interferes with the host's ubiquitination pathway and targets host proteins for proteasomal degradation. Can ubiquitinate ubiquitin, giving rise to polyubiquitin chains (in vitro). Polyubiquitinates host PKN1, leading to its proteasomal degradation. Down-modulates production of host pro-inflammatory cytokines by inhibiting NF-kappa-B-dependent gene expression; this depends only partially on its E3 ubiquitin-protein ligase activity. In Salmonella typhimurium (strain 14028s / SGSC 2262), this protein is E3 ubiquitin-protein ligase SspH1 (sspH1).